We begin with the raw amino-acid sequence, 115 residues long: NADH-ubiquinone oxidoreductase chain 3 (115 aa).

A run of 3 helical transmembrane segments spans residues 4–24 (IVILFINATLSLGLITVAFWL), 55–75 (FFLIGITFLLFDLEITLLLPL), and 84–104 (TYFTMLVSFLLVSVLALGLMY).

The protein belongs to the complex I subunit 3 family. As to quaternary structure, core subunit of respiratory chain NADH dehydrogenase (Complex I) which is composed of 45 different subunits. Interacts with TMEM186. Interacts with TMEM242.

The protein resides in the mitochondrion inner membrane. It catalyses the reaction a ubiquinone + NADH + 5 H(+)(in) = a ubiquinol + NAD(+) + 4 H(+)(out). Its function is as follows. Core subunit of the mitochondrial membrane respiratory chain NADH dehydrogenase (Complex I) which catalyzes electron transfer from NADH through the respiratory chain, using ubiquinone as an electron acceptor. Essential for the catalytic activity of complex I. This Eligmodontia typus (Highland gerbil mouse) protein is NADH-ubiquinone oxidoreductase chain 3.